The primary structure comprises 72 residues: Mitotic-spindle organizing protein 1 (72 aa).

The protein belongs to the MOZART1 family. Part of the gamma-tubulin complex.

It localises to the cytoplasm. It is found in the cytoskeleton. The protein resides in the microtubule organizing center. The protein localises to the spindle pole body. Its function is as follows. Required for gamma-tubulin complex recruitment to the microtubule organizing center (MTOC). This chain is Mitotic-spindle organizing protein 1, found in Coccidioides immitis (strain RS) (Valley fever fungus).